The primary structure comprises 829 residues: Periplasmic nitrate reductase (829 aa).

Positions 1 to 30 form a signal peptide, tat-type signal; that stretch reads MKMTRRAFVKANAAASAAAVAGITLPASAA. Residues 41–97 enclose the 4Fe-4S Mo/W bis-MGD-type domain; that stretch reads ITWDKAPCRFCGTGCSVLVGTQNGKVVATQGDPEAPVNKGLNCIKGYFLSKIMYGQD. Positions 48, 51, 55, and 83 each coordinate [4Fe-4S] cluster. Mo-bis(molybdopterin guanine dinucleotide) is bound by residues lysine 85, glutamine 152, asparagine 177, cysteine 181, 214–221, 245–249, 264–266, methionine 374, glutamine 378, asparagine 484, 510–511, lysine 533, aspartate 560, and 718–727; these read WGSNMAEM, STYYH, QSD, SD, and TGRVLEHWHT. Phenylalanine 794 is a binding site for substrate. 2 residues coordinate Mo-bis(molybdopterin guanine dinucleotide): asparagine 802 and lysine 819.

This sequence belongs to the prokaryotic molybdopterin-containing oxidoreductase family. NasA/NapA/NarB subfamily. In terms of assembly, component of the periplasmic nitrate reductase NapAB complex composed of NapA and NapB. [4Fe-4S] cluster is required as a cofactor. Mo-bis(molybdopterin guanine dinucleotide) serves as cofactor. Predicted to be exported by the Tat system. The position of the signal peptide cleavage has not been experimentally proven.

The protein localises to the periplasm. It carries out the reaction 2 Fe(II)-[cytochrome] + nitrate + 2 H(+) = 2 Fe(III)-[cytochrome] + nitrite + H2O. Functionally, catalytic subunit of the periplasmic nitrate reductase complex NapAB. Receives electrons from NapB and catalyzes the reduction of nitrate to nitrite. The polypeptide is Periplasmic nitrate reductase (Vibrio vulnificus (strain YJ016)).